The sequence spans 104 residues: Large ribosomal subunit protein uL23 (104 aa).

It belongs to the universal ribosomal protein uL23 family. In terms of assembly, part of the 50S ribosomal subunit. Contacts protein L29, and trigger factor when it is bound to the ribosome.

One of the early assembly proteins it binds 23S rRNA. One of the proteins that surrounds the polypeptide exit tunnel on the outside of the ribosome. Forms the main docking site for trigger factor binding to the ribosome. In Ralstonia pickettii (strain 12J), this protein is Large ribosomal subunit protein uL23.